A 445-amino-acid polypeptide reads, in one-letter code: tRNA-2-methylthio-N(6)-dimethylallyladenosine synthase (445 aa).

The MTTase N-terminal domain occupies 9 to 125 (LKYRILTYGC…LPYLIARAKE (117 aa)). Positions 18, 54, 88, 162, 166, and 169 each coordinate [4Fe-4S] cluster. Residues 148 to 378 (RKPGLSAFVN…NRRQYQIATE (231 aa)) enclose the Radical SAM core domain. The TRAM domain occupies 381–444 (QELQGSIQEV…TFSLFGEIFN (64 aa)).

It belongs to the methylthiotransferase family. MiaB subfamily. In terms of assembly, monomer. [4Fe-4S] cluster is required as a cofactor.

The protein localises to the cytoplasm. It catalyses the reaction N(6)-dimethylallyladenosine(37) in tRNA + (sulfur carrier)-SH + AH2 + 2 S-adenosyl-L-methionine = 2-methylsulfanyl-N(6)-dimethylallyladenosine(37) in tRNA + (sulfur carrier)-H + 5'-deoxyadenosine + L-methionine + A + S-adenosyl-L-homocysteine + 2 H(+). Its function is as follows. Catalyzes the methylthiolation of N6-(dimethylallyl)adenosine (i(6)A), leading to the formation of 2-methylthio-N6-(dimethylallyl)adenosine (ms(2)i(6)A) at position 37 in tRNAs that read codons beginning with uridine. The sequence is that of tRNA-2-methylthio-N(6)-dimethylallyladenosine synthase from Syntrophomonas wolfei subsp. wolfei (strain DSM 2245B / Goettingen).